Here is a 494-residue protein sequence, read N- to C-terminus: WD repeat-containing protein 37 (494 aa).

Composition is skewed to polar residues over residues M1–Q13 and S22–S31. The disordered stretch occupies residues M1–L50. Residues E32–D47 are compositionally biased toward basic and acidic residues. WD repeat units lie at residues G154 to K194 and G197 to Q236. Residues P237–S265 are disordered. A compositionally biased stretch (acidic residues) spans G245–V263. WD repeat units follow at residues S279–S318, G321–V360, G365–A403, R406–L445, and G452–E493.

In terms of assembly, forms homodimers. Interacts with PACS1. Interacts with PACS2.

Its subcellular location is the cytoplasm. It is found in the nucleus. Its function is as follows. Required for normal ER Ca2+ handling in lymphocytes. Together with PACS1, it plays an essential role in stabilizing peripheral lymphocyte populations. The chain is WD repeat-containing protein 37 (WDR37) from Homo sapiens (Human).